A 435-amino-acid chain; its full sequence is Amidase 1 (435 aa).

Residues K38 and S115 each act as charge relay system in the active site. S139 acts as the Acyl-ester intermediate in catalysis.

This sequence belongs to the amidase family.

It is found in the cytoplasm. Its subcellular location is the nucleus. The protein localises to the nucleoplasm. It catalyses the reaction a monocarboxylic acid amide + H2O = a monocarboxylate + NH4(+). Its function is as follows. Amidase involved in auxin biosynthesis. Converts indole-3-acetamide (IAM) to indole-3-acetate, and phenyl-2-acetamide (PAM) to phenyl-2-acetate. Substrate preference is PAM &gt; IAM. This Oryza sativa subsp. japonica (Rice) protein is Amidase 1.